The primary structure comprises 239 residues: Putative 3-methyladenine DNA glycosylase (239 aa).

Belongs to the DNA glycosylase MPG family.

The chain is Putative 3-methyladenine DNA glycosylase from Pseudomonas aeruginosa (strain ATCC 15692 / DSM 22644 / CIP 104116 / JCM 14847 / LMG 12228 / 1C / PRS 101 / PAO1).